A 278-amino-acid polypeptide reads, in one-letter code: Myb/SANT-like DNA-binding domain-containing protein 1 (278 aa).

The segment at 1 to 27 (MVRGAGPGPSLSALSHPTGASGMAAAE) is disordered. The region spanning 44–129 (RNWTDAEMRG…PDWPYYLAID (86 aa)) is the Myb-like domain. A disordered region spans residues 138–168 (SCDGKLPDSQPPGPSTSQTEASLSPPAKSTP).

This Homo sapiens (Human) protein is Myb/SANT-like DNA-binding domain-containing protein 1 (MSANTD1).